The primary structure comprises 265 residues: MSDILNTILARKADEVAERSARVPLAELIARSADLPLTRGFAAAMQASIAAGDPAVIAEVKKASPSKGVIRPDFQPADIAVSYEFGGATCLSVLTDVDFFQGSDAYLRQARDACTLPVLRKDFTVDPYQVYEARVLGADCILLIVSALEDAQLADLSGLAMQLGLDVLVEVHDIDELERAVQVPVPLIGINNRNLRTFEVTLQTTLDMRAAVPRDRVLVTESGIVTQADVQLMRSHDVNAFLVGETFMRAAEPGESLRQLFFAHD.

The protein belongs to the TrpC family.

It catalyses the reaction 1-(2-carboxyphenylamino)-1-deoxy-D-ribulose 5-phosphate + H(+) = (1S,2R)-1-C-(indol-3-yl)glycerol 3-phosphate + CO2 + H2O. It participates in amino-acid biosynthesis; L-tryptophan biosynthesis; L-tryptophan from chorismate: step 4/5. The sequence is that of Indole-3-glycerol phosphate synthase from Xanthomonas euvesicatoria pv. vesicatoria (strain 85-10) (Xanthomonas campestris pv. vesicatoria).